Here is a 156-residue protein sequence, read N- to C-terminus: ATP synthase subunit b (156 aa).

Residues 11 to 31 traverse the membrane as a helical segment; it reads AIAFVLFVLFCMKYVWPPIMA.

Belongs to the ATPase B chain family. As to quaternary structure, F-type ATPases have 2 components, F(1) - the catalytic core - and F(0) - the membrane proton channel. F(1) has five subunits: alpha(3), beta(3), gamma(1), delta(1), epsilon(1). F(0) has three main subunits: a(1), b(2) and c(10-14). The alpha and beta chains form an alternating ring which encloses part of the gamma chain. F(1) is attached to F(0) by a central stalk formed by the gamma and epsilon chains, while a peripheral stalk is formed by the delta and b chains.

It is found in the cell inner membrane. Its function is as follows. F(1)F(0) ATP synthase produces ATP from ADP in the presence of a proton or sodium gradient. F-type ATPases consist of two structural domains, F(1) containing the extramembraneous catalytic core and F(0) containing the membrane proton channel, linked together by a central stalk and a peripheral stalk. During catalysis, ATP synthesis in the catalytic domain of F(1) is coupled via a rotary mechanism of the central stalk subunits to proton translocation. Functionally, component of the F(0) channel, it forms part of the peripheral stalk, linking F(1) to F(0). This is ATP synthase subunit b from Proteus mirabilis (strain HI4320).